Here is a 562-residue protein sequence, read N- to C-terminus: Probable ganciclovir kinase (562 aa).

The segment covering 1–16 has biased composition (polar residues); the sequence is MDNGVETPQGQKTQPI. The segment at 1–32 is disordered; sequence MDNGVETPQGQKTQPINLPPVRKKLRKHEGLG. Residues 201–209 and Lys218 each bind ATP; that span reads LGVGAYGKV. Asp313 acts as the Proton acceptor in catalysis.

This sequence belongs to the protein kinase superfamily. Tyr protein kinase family. HCMV ganciclovir subfamily.

Its function is as follows. Phosphorylates the antiviral nucleoside analog ganciclovir. This Homo sapiens (Human) protein is Probable ganciclovir kinase (U69).